The primary structure comprises 413 residues: Phosphopentomutase (413 aa).

Mn(2+) contacts are provided by Asp-11, Asp-306, His-311, Asp-347, His-348, and His-359.

The protein belongs to the phosphopentomutase family. Requires Mn(2+) as cofactor.

Its subcellular location is the cytoplasm. It carries out the reaction 2-deoxy-alpha-D-ribose 1-phosphate = 2-deoxy-D-ribose 5-phosphate. The catalysed reaction is alpha-D-ribose 1-phosphate = D-ribose 5-phosphate. It participates in carbohydrate degradation; 2-deoxy-D-ribose 1-phosphate degradation; D-glyceraldehyde 3-phosphate and acetaldehyde from 2-deoxy-alpha-D-ribose 1-phosphate: step 1/2. Its function is as follows. Isomerase that catalyzes the conversion of deoxy-ribose 1-phosphate (dRib-1-P) and ribose 1-phosphate (Rib-1-P) to deoxy-ribose 5-phosphate (dRib-5-P) and ribose 5-phosphate (Rib-5-P), respectively. This chain is Phosphopentomutase, found in Helicobacter pylori (strain P12).